The primary structure comprises 459 residues: MHYPLSLALAFLPFGIQAQQTLWGQCGGQGYSGATSCVAGATCATVNEYYAQCTPAAGTSSATTLKTTTSSTTAAVTTTTTTQSPTGSASPTTTASASGNPFSGYQLYVNPYYSSEVASLAIPSLTGSLSSLQAAATAAAKVPSFVWLDTAAKVPTMGDYLADIQSQNAAGANPPIAGQFVVYDLPDRDCAALASNGEYSIADNGVEHYKSYIDSIREILVQYSDVHTLLVIEPDSLANLVTNLNVAKCANAESAYLECTNYALTQLNLPNVAMYLDAGHAGWLGWPANQQPAADLFASVYKNASSPAAVRGLATNVANYNAWTISSCPSYTQGNSVCDEQQYINAIAPLLQAQGFDAHFIVDTGRNGKQPTGQQAWGDWCNVINTGFGERPTTDTGDALVDAFVWVKPGGESDGTSDSSATRYDAHCGYSDALQPAPEAGTWFQAYFVQLLTNANPAF.

Positions 1 to 18 (MHYPLSLALAFLPFGIQA) are cleaved as a signal peptide. The CBM1 domain occupies 19 to 54 (QQTLWGQCGGQGYSGATSCVAGATCATVNEYYAQCT). Disulfide bonds link Cys-26-Cys-43 and Cys-37-Cys-53. The interval 54–94 (TPAAGTSSATTLKTTTSSTTAAVTTTTTTQSPTGSASPTTT) is thr-rich linker. Residues 76-97 (VTTTTTTQSPTGSASPTTTASA) are disordered. The catalytic stretch occupies residues 95-459 (ASASGNPFSG…QLLTNANPAF (365 aa)). Residue Asp-189 is part of the active site. A disulfide bond links Cys-190 and Cys-249. Asp-235 acts as the Proton donor in catalysis. The N-linked (GlcNAc...) asparagine glycan is linked to Asn-303. An intrachain disulfide couples Cys-381 to Cys-428. Asp-414 (nucleophile) is an active-site residue.

This sequence belongs to the glycosyl hydrolase 6 (cellulase B) family.

It is found in the secreted. The catalysed reaction is Hydrolysis of (1-&gt;4)-beta-D-glucosidic linkages in cellulose and cellotetraose, releasing cellobiose from the non-reducing ends of the chains.. The biological conversion of cellulose to glucose generally requires three types of hydrolytic enzymes: (1) Endoglucanases which cut internal beta-1,4-glucosidic bonds; (2) Exocellobiohydrolases that cut the disaccharide cellobiose from the non-reducing end of the cellulose polymer chain; (3) Beta-1,4-glucosidases which hydrolyze the cellobiose and other short cello-oligosaccharides to glucose. This chain is Probable 1,4-beta-D-glucan cellobiohydrolase C (cbhC), found in Aspergillus niger (strain ATCC MYA-4892 / CBS 513.88 / FGSC A1513).